We begin with the raw amino-acid sequence, 70 residues long: Waprin-Thr1 (70 aa).

Positions 1 to 19 (MKARLLLLSVVILVGMVSA) are cleaved as a signal peptide. The WAP domain occupies 20 to 70 (ENEKAGSCPDVNQPIPPLGLCRNMCESDSGCPNNEKCCKNGCGFMTCSRPR). 4 disulfides stabilise this stretch: Cys27/Cys57, Cys40/Cys61, Cys44/Cys56, and Cys50/Cys66.

This sequence belongs to the venom waprin family. In terms of tissue distribution, expressed by the venom gland.

The protein resides in the secreted. Functionally, damages membranes of susceptible bacteria. Has no hemolytic activity. Not toxic to mice. Does not inhibit the proteinases elastase and cathepsin G. The sequence is that of Waprin-Thr1 from Thrasops jacksonii (Jackson's black tree snake).